Here is a 250-residue protein sequence, read N- to C-terminus: Coproheme decarboxylase (250 aa).

Fe-coproporphyrin III is bound by residues Arg-131, 145–149 (YPMNK), His-172, and Gln-185. The active site involves Tyr-145.

This sequence belongs to the ChdC family. Type 1 subfamily. Fe-coproporphyrin III is required as a cofactor.

It carries out the reaction Fe-coproporphyrin III + 2 H2O2 + 2 H(+) = heme b + 2 CO2 + 4 H2O. The enzyme catalyses Fe-coproporphyrin III + H2O2 + H(+) = harderoheme III + CO2 + 2 H2O. The catalysed reaction is harderoheme III + H2O2 + H(+) = heme b + CO2 + 2 H2O. The protein operates within porphyrin-containing compound metabolism; protoheme biosynthesis. Functionally, involved in coproporphyrin-dependent heme b biosynthesis. Catalyzes the decarboxylation of Fe-coproporphyrin III (coproheme) to heme b (protoheme IX), the last step of the pathway. The reaction occurs in a stepwise manner with a three-propionate intermediate. The polypeptide is Coproheme decarboxylase (Staphylococcus aureus (strain bovine RF122 / ET3-1)).